The sequence spans 466 residues: Soluble pyridine nucleotide transhydrogenase (466 aa).

36–45 (EKESSVGGGC) contributes to the FAD binding site.

This sequence belongs to the class-I pyridine nucleotide-disulfide oxidoreductase family. FAD serves as cofactor.

It localises to the cytoplasm. The enzyme catalyses NAD(+) + NADPH = NADH + NADP(+). Functionally, conversion of NADPH, generated by peripheral catabolic pathways, to NADH, which can enter the respiratory chain for energy generation. The protein is Soluble pyridine nucleotide transhydrogenase of Vibrio parahaemolyticus serotype O3:K6 (strain RIMD 2210633).